Here is a 226-residue protein sequence, read N- to C-terminus: Histidine biosynthesis bifunctional protein HisIE (226 aa).

The segment at 1–131 (MMPMNQEFIQ…STFNRPLSNT (131 aa)) is phosphoribosyl-AMP cyclohydrolase. Positions 132 to 226 (CSELFEVIKD…KRRQSKSNPK (95 aa)) are phosphoribosyl-ATP pyrophosphohydrolase.

In the N-terminal section; belongs to the PRA-CH family. The protein in the C-terminal section; belongs to the PRA-PH family.

It localises to the cytoplasm. It carries out the reaction 1-(5-phospho-beta-D-ribosyl)-ATP + H2O = 1-(5-phospho-beta-D-ribosyl)-5'-AMP + diphosphate + H(+). It catalyses the reaction 1-(5-phospho-beta-D-ribosyl)-5'-AMP + H2O = 1-(5-phospho-beta-D-ribosyl)-5-[(5-phospho-beta-D-ribosylamino)methylideneamino]imidazole-4-carboxamide. The protein operates within amino-acid biosynthesis; L-histidine biosynthesis; L-histidine from 5-phospho-alpha-D-ribose 1-diphosphate: step 2/9. Its pathway is amino-acid biosynthesis; L-histidine biosynthesis; L-histidine from 5-phospho-alpha-D-ribose 1-diphosphate: step 3/9. This is Histidine biosynthesis bifunctional protein HisIE from Prochlorococcus marinus (strain SARG / CCMP1375 / SS120).